We begin with the raw amino-acid sequence, 76 residues long: Tautomerase PptA (76 aa).

Pro2 (proton acceptor; via imino nitrogen) is an active-site residue.

The protein belongs to the 4-oxalocrotonate tautomerase family. PptA subfamily. Homodimer.

The protein resides in the cytoplasm. In Pectobacterium carotovorum subsp. carotovorum (strain PC1), this protein is Tautomerase PptA.